Consider the following 164-residue polypeptide: R-phycoerythrin alpha chain (164 aa).

(2R,3E)-phycoerythrobilin contacts are provided by N47, K81, C82, R84, H88, R137, C139, and R142.

The protein belongs to the phycobiliprotein family. As to quaternary structure, heterododecamer of 6 alpha and 6 beta chains. The basic functional unit of phycobiliproteins is a ring-shaped hexamer formed from two back-to-back trimers contacting via the alpha chain subunits. The trimers are composed of alpha/beta subunit heterodimers arranged around a three-fold axis of symmetry. The phycoerythrins also contain a gamma subunit which is located in the center of the hexamer. In terms of processing, contains two covalently linked phycoerythrobilin chromophores.

It localises to the plastid. Its subcellular location is the chloroplast thylakoid membrane. Light-harvesting photosynthetic tetrapyrrole chromophore-protein from the phycobiliprotein complex. This chain is R-phycoerythrin alpha chain (cpeA), found in Griffithsia monilis (Red alga).